Consider the following 135-residue polypeptide: FK506-binding protein 2 (135 aa).

An N-terminal signal peptide occupies residues 1–20 (MRVPIITTLLTLALTGLSQA). The 89-residue stretch at 40-128 (GDTVKMHYRG…IFQTELLEIE (89 aa)) folds into the PPIase FKBP-type domain. The Prevents secretion from ER signature appears at 132 to 135 (KDEL).

It belongs to the FKBP-type PPIase family. FKBP2 subfamily.

It localises to the endoplasmic reticulum. It carries out the reaction [protein]-peptidylproline (omega=180) = [protein]-peptidylproline (omega=0). Inhibited by both FK506 and rapamycin. In terms of biological role, PPIases accelerate the folding of proteins. It catalyzes the cis-trans isomerization of proline imidic peptide bonds in oligopeptides. The polypeptide is FK506-binding protein 2 (fkbB) (Emericella nidulans (strain FGSC A4 / ATCC 38163 / CBS 112.46 / NRRL 194 / M139) (Aspergillus nidulans)).